A 187-amino-acid polypeptide reads, in one-letter code: Coiled-coil domain-containing protein 201 (187 aa).

Disordered regions lie at residues 1-79 (MEPG…PPAT) and 92-159 (KESS…RAAA). Positions 111–131 (LTQRQRQRQQQQQQQESLRAK) form a coiled coil. Residues 147–157 (GRKRRDPKKRA) are compositionally biased toward basic residues.

The protein is Coiled-coil domain-containing protein 201 of Homo sapiens (Human).